An 804-amino-acid chain; its full sequence is Zinc finger protein 541 (804 aa).

Disordered regions lie at residues 21–120 and 133–197; these read SKAS…NPDI and TLDL…GNPR. The C2H2-type 1 zinc finger occupies 285 to 307; the sequence is FICKNCSQMFYTEKGLSSHMCFH. Positions 379 to 426 are disordered; sequence MEQEKDGEERDSKESSQQRKRKKRPPPKRLFIPPPPSTAGEPGPAGCH. Over residues 380-395 the composition is skewed to basic and acidic residues; that stretch reads EQEKDGEERDSKESSQ. Over residues 396–405 the composition is skewed to basic residues; the sequence is QRKRKKRPPP. The ELM2 domain maps to 509–601; the sequence is PHINIGSRFQ…VALETLLLRG (93 aa). The 52-residue stretch at 616-667 folds into the SANT domain; that stretch reads TGSDVWTPIEKRLFKKAFYAHKKDFYLIHKTIQTKTVAQCVEYYYIWKKMIK. A disordered region spans residues 680–743; sequence VKREPEEVER…TPEPSGSVES (64 aa). Basic and acidic residues predominate over residues 690–721; sequence TEEKVPCSPRERPSHHPIPELKIKTKSYRRES. The segment at 747–769 adopts a C2H2-type 2 zinc-finger fold; it reads FPCRECERVFDKIKSRNAHMKRH.

As to quaternary structure, interacts with DNTTIP1. Identified in a complex with KCDT19, HDAC1 and HSPA2s. Component of a histone deacetylase complex containing DNTTIP1, ZNF541, HDAC1 and HDAC2. Identified in a complex with HDAC1, HDAC2, DNTTIP1 and KCTD19.

It localises to the nucleus. Its function is as follows. Transcription regulator which is essential for male fertility and for the completion of meiotic prophase in spermatocytes. Regulates progression of the pachytene stage of meiotic prophase by activating the expression of genes involved in meiosis and post-meiosis during spermatogenesis. Maintains the repression of pre-pachytene transcriptional programs, including meiotic double-strand breaks (DSB) formation genes in pachytene spermatocytes and suppresses aberrant DSB formation after mid-pachytene, thus ensuring meiosis progression. The sequence is that of Zinc finger protein 541 (ZNF541) from Macaca fascicularis (Crab-eating macaque).